Here is a 44-residue protein sequence, read N- to C-terminus: Protein PsbN (44 aa).

A helical membrane pass occupies residues 6–26; that stretch reads FFFSLFVWCLLLSITAYSLYV.

Belongs to the PsbN family.

It localises to the plastid. It is found in the chloroplast thylakoid membrane. Functionally, may play a role in photosystem I and II biogenesis. The polypeptide is Protein PsbN (Tupiella akineta (Green alga)).